Here is a 415-residue protein sequence, read N- to C-terminus: Tyrosine--tRNA ligase (415 aa).

Tyr-34 provides a ligand contact to L-tyrosine. A 'HIGH' region motif is present at residues 39–48 (PTADSLHLGH). L-tyrosine is bound by residues Tyr-164 and Gln-168. Positions 226 to 230 (KFGKS) match the 'KMSKS' region motif. An ATP-binding site is contributed by Lys-229. The S4 RNA-binding domain maps to 348 to 415 (KNVVDFLVDG…KKKYFLGKVK (68 aa)).

This sequence belongs to the class-I aminoacyl-tRNA synthetase family. TyrS type 1 subfamily. In terms of assembly, homodimer.

It localises to the cytoplasm. It carries out the reaction tRNA(Tyr) + L-tyrosine + ATP = L-tyrosyl-tRNA(Tyr) + AMP + diphosphate + H(+). Its function is as follows. Catalyzes the attachment of tyrosine to tRNA(Tyr) in a two-step reaction: tyrosine is first activated by ATP to form Tyr-AMP and then transferred to the acceptor end of tRNA(Tyr). The sequence is that of Tyrosine--tRNA ligase from Leuconostoc mesenteroides subsp. mesenteroides (strain ATCC 8293 / DSM 20343 / BCRC 11652 / CCM 1803 / JCM 6124 / NCDO 523 / NBRC 100496 / NCIMB 8023 / NCTC 12954 / NRRL B-1118 / 37Y).